The sequence spans 198 residues: Riboflavin synthase (198 aa).

Lumazine-binding repeat units lie at residues 1–95 and 96–188; these read MFSG…IGGH and FVSG…VDTV. 2,4-dihydroxypteridine is bound by residues 4–6, 46–48, 60–65, 99–101, lysine 130, 139–141, and 153–158; these read GII, CLT, DVTEET, GHV, SLT, and SVIPET.

As to quaternary structure, homotrimer.

It catalyses the reaction 2 6,7-dimethyl-8-(1-D-ribityl)lumazine + H(+) = 5-amino-6-(D-ribitylamino)uracil + riboflavin. The protein operates within cofactor biosynthesis; riboflavin biosynthesis; riboflavin from 2-hydroxy-3-oxobutyl phosphate and 5-amino-6-(D-ribitylamino)uracil: step 2/2. Functionally, catalyzes the dismutation of two molecules of 6,7-dimethyl-8-ribityllumazine, resulting in the formation of riboflavin and 5-amino-6-(D-ribitylamino)uracil. In Chlamydia muridarum (strain MoPn / Nigg), this protein is Riboflavin synthase (ribE).